The chain runs to 282 residues: MAELLTLREAVERFVNDGDTVALEGFTHLIPTAASHEIIRQGKKDLHLVRMTPDLVYDLLIGAGCARKLTFSWGGNPGVGSLHRLRDAVEKGWPNALEIDEHSHADLANSYVAGASGLPFAVLRAYAGSDLPKVNPNIKFINCPFTGEQLAAVPSVRPDVTVIHAQKADRKGNVLLWGILGVQKEAALAAKRCIVTVEEIVDDLNAPMNSCVLPTWALSAVCHVPGGSHPSYAHGYYERDNRFYQAWDPIARDRETFTAWIDEYIRGTKDFSEFQAKIAEGK.

This sequence belongs to the 3-oxoacid CoA-transferase subunit A family. As to quaternary structure, heterotetramer composed of 2 A and 2 B subunits.

It carries out the reaction 3-oxoadipate + succinyl-CoA = 3-oxoadipyl-CoA + succinate. It functions in the pathway aromatic compound metabolism; beta-ketoadipate pathway; acetyl-CoA and succinyl-CoA from 3-oxoadipate: step 1/2. In terms of biological role, catalyzes the CoA transfer from succinate to 3-oxoadipate (beta-ketoadipate). The polypeptide is 3-oxoadipate CoA-transferase subunit A (catI) (Pseudomonas knackmussii (strain DSM 6978 / CCUG 54928 / LMG 23759 / B13)).